We begin with the raw amino-acid sequence, 239 residues long: tRNA (guanine-N(1)-)-methyltransferase (239 aa).

Residues glycine 115 and 134–139 contribute to the S-adenosyl-L-methionine site; that span reads MGDFVL. The disordered stretch occupies residues 210–239; sequence QQQREQRTQERRPDLWNRWQQIQNPTPPAP. The span at 211-224 shows a compositional bias: basic and acidic residues; the sequence is QQREQRTQERRPDL.

It belongs to the RNA methyltransferase TrmD family. Homodimer.

It localises to the cytoplasm. The enzyme catalyses guanosine(37) in tRNA + S-adenosyl-L-methionine = N(1)-methylguanosine(37) in tRNA + S-adenosyl-L-homocysteine + H(+). Its function is as follows. Specifically methylates guanosine-37 in various tRNAs. This chain is tRNA (guanine-N(1)-)-methyltransferase, found in Synechococcus sp. (strain CC9311).